The following is a 332-amino-acid chain: Fructose-1,6-bisphosphatase class 1 (332 aa).

Mg(2+) is bound by residues glutamate 89, aspartate 110, leucine 112, and aspartate 113. Residues 113–116 (DGSS), asparagine 206, tyrosine 239, 257–259 (YLY), and lysine 269 each bind substrate. Glutamate 275 serves as a coordination point for Mg(2+).

The protein belongs to the FBPase class 1 family. In terms of assembly, homotetramer. Mg(2+) is required as a cofactor.

It is found in the cytoplasm. The catalysed reaction is beta-D-fructose 1,6-bisphosphate + H2O = beta-D-fructose 6-phosphate + phosphate. The protein operates within carbohydrate biosynthesis; gluconeogenesis. The sequence is that of Fructose-1,6-bisphosphatase class 1 from Escherichia coli O157:H7.